Here is a 345-residue protein sequence, read N- to C-terminus: Fructose-bisphosphate aldolase, plasmid (345 aa).

S50 provides a ligand contact to D-glyceraldehyde 3-phosphate. D83 serves as the catalytic Proton donor. Residues H84, D105, E142, and H198 each contribute to the Zn(2+) site. Dihydroxyacetone phosphate is bound at residue G199. A Zn(2+)-binding site is contributed by H232. Residues 233 to 235 and 275 to 278 contribute to the dihydroxyacetone phosphate site; these read GSS and NIDT.

Belongs to the class II fructose-bisphosphate aldolase family. As to quaternary structure, homodimer. It depends on Zn(2+) as a cofactor.

The enzyme catalyses beta-D-fructose 1,6-bisphosphate = D-glyceraldehyde 3-phosphate + dihydroxyacetone phosphate. The protein operates within carbohydrate biosynthesis; Calvin cycle. It participates in carbohydrate degradation; glycolysis; D-glyceraldehyde 3-phosphate and glycerone phosphate from D-glucose: step 4/4. In terms of biological role, catalyzes the aldol condensation of dihydroxyacetone phosphate (DHAP or glycerone-phosphate) with glyceraldehyde 3-phosphate (G3P) to form fructose 1,6-bisphosphate (FBP) in gluconeogenesis and the reverse reaction in glycolysis. The protein is Fructose-bisphosphate aldolase, plasmid (cbbAP) of Cupriavidus necator (strain ATCC 17699 / DSM 428 / KCTC 22496 / NCIMB 10442 / H16 / Stanier 337) (Ralstonia eutropha).